Reading from the N-terminus, the 330-residue chain is G-protein coupled receptor 74 (330 aa).

7 helical membrane passes run 50 to 70 (LIVV…NLWL), 85 to 105 (FILI…IFSI), 121 to 141 (MVVF…LCFD), 160 to 180 (WVFC…QKAL), 210 to 230 (VAVS…CIFY), 252 to 272 (MLLF…LSFI), and 295 to 315 (LPLL…IYIL). A disulfide bridge links Cys-117 with Cys-195.

Belongs to the G-protein coupled receptor 1 family.

The protein localises to the host membrane. This is G-protein coupled receptor 74 (74) from Equus caballus (Horse).